We begin with the raw amino-acid sequence, 125 residues long: L-fucose mutarotase (125 aa).

His13 serves as the catalytic Proton donor.

Belongs to the RbsD / FucU family. FucU mutarotase subfamily.

It carries out the reaction alpha-L-fucose = beta-L-fucose. Its activity is regulated as follows. Active toward L-galactopyranoside and D-arabinopyranoside but no D-fucopyranoside activity detected. Its function is as follows. Plays a role in the catabolism of L-fucose. Involved in the anomeric conversion of L-fucose. In Xanthomonas campestris pv. campestris (strain ATCC 33913 / DSM 3586 / NCPPB 528 / LMG 568 / P 25), this protein is L-fucose mutarotase.